An 89-amino-acid chain; its full sequence is Small ribosomal subunit protein uS15 (89 aa).

Belongs to the universal ribosomal protein uS15 family. In terms of assembly, part of the 30S ribosomal subunit. Forms a bridge to the 50S subunit in the 70S ribosome, contacting the 23S rRNA.

One of the primary rRNA binding proteins, it binds directly to 16S rRNA where it helps nucleate assembly of the platform of the 30S subunit by binding and bridging several RNA helices of the 16S rRNA. Its function is as follows. Forms an intersubunit bridge (bridge B4) with the 23S rRNA of the 50S subunit in the ribosome. This Azobacteroides pseudotrichonymphae genomovar. CFP2 protein is Small ribosomal subunit protein uS15.